The following is a 983-amino-acid chain: ER membrane protein complex subunit 1 (983 aa).

The first 16 residues, 1 to 16 (MAAGLWALLLPLAAAV), serve as a signal peptide directing secretion. Residues 17–952 (YEDQVGKFDW…FDVLKDDYDY (936 aa)) lie on the Lumenal side of the membrane. A disulfide bridge links Cys-221 with Cys-231. Asn-279 carries N-linked (GlcNAc...) asparagine glycosylation. Residues Cys-332 and Cys-360 are joined by a disulfide bond. N-linked (GlcNAc...) asparagine glycosylation is found at Asn-362, Asn-808, and Asn-903. A helical transmembrane segment spans residues 953–973 (VLISSVLFGLVFATMITKRLA). The Cytoplasmic segment spans residues 974–983 (QVKLLNRAWR).

Belongs to the EMC1 family. As to quaternary structure, component of the ER membrane protein complex (EMC).

The protein resides in the endoplasmic reticulum membrane. Part of the endoplasmic reticulum membrane protein complex (EMC) that enables the energy-independent insertion into endoplasmic reticulum membranes of newly synthesized membrane proteins. Preferentially accommodates proteins with transmembrane domains that are weakly hydrophobic or contain destabilizing features such as charged and aromatic residues. Involved in the cotranslational insertion of multi-pass membrane proteins in which stop-transfer membrane-anchor sequences become ER membrane spanning helices. It is also required for the post-translational insertion of tail-anchored/TA proteins in endoplasmic reticulum membranes. By mediating the proper cotranslational insertion of N-terminal transmembrane domains in an N-exo topology, with translocated N-terminus in the lumen of the ER, controls the topology of multi-pass membrane proteins like the G protein-coupled receptors. By regulating the insertion of various proteins in membranes, it is indirectly involved in many cellular processes. The chain is ER membrane protein complex subunit 1 (EMC1) from Gallus gallus (Chicken).